The sequence spans 320 residues: o-succinylbenzoate synthase (320 aa).

The active-site Proton donor is Lys133. Residues Asp161, Glu190, and Asp213 each coordinate Mg(2+). The active-site Proton acceptor is Lys235.

This sequence belongs to the mandelate racemase/muconate lactonizing enzyme family. MenC type 1 subfamily. It depends on a divalent metal cation as a cofactor.

It catalyses the reaction (1R,6R)-6-hydroxy-2-succinyl-cyclohexa-2,4-diene-1-carboxylate = 2-succinylbenzoate + H2O. The protein operates within quinol/quinone metabolism; 1,4-dihydroxy-2-naphthoate biosynthesis; 1,4-dihydroxy-2-naphthoate from chorismate: step 4/7. It functions in the pathway quinol/quinone metabolism; menaquinone biosynthesis. In terms of biological role, converts 2-succinyl-6-hydroxy-2,4-cyclohexadiene-1-carboxylate (SHCHC) to 2-succinylbenzoate (OSB). The sequence is that of o-succinylbenzoate synthase from Escherichia coli O157:H7.